The sequence spans 131 residues: Peptidyl-prolyl cis-trans isomerase NIMA-interacting 4 (131 aa).

The necessary for nuclear localization and DNA-binding stretch occupies residues 1–25 (MPPKGKSGSGKGGKGGAASGSDSAD). A disordered region spans residues 1–39 (MPPKGKSGSGKGGKGGAASGSDSADKKSQGPKGGGNAVK). The necessary for association with the pre-rRNP complexes stretch occupies residues 1-41 (MPPKGKSGSGKGGKGGAASGSDSADKKSQGPKGGGNAVKVR). Over residues 7–18 (SGSGKGGKGGAA) the composition is skewed to gly residues. Ser19 is modified (phosphoserine; by CK2). The region spanning 35–129 (GNAVKVRHIL…FGYHIIMVEG (95 aa)) is the PpiC domain.

The protein belongs to the PpiC/parvulin rotamase family. PIN4 subfamily. Found in pre-ribosomal ribonucleoprotein (pre-rRNP) complexes. Phosphorylated. Phosphorylation occurs both in the nucleus and the cytoplasm. Phosphorylation at Ser-19 does not affect its PPIase activity but is required for nuclear localization, and the dephosphorylation is a prerequisite for the binding to DNA. The unphosphorylated form associates with the pre-rRNP complexes in the nucleus.

Its subcellular location is the nucleus. It localises to the nucleolus. The protein resides in the cytoplasm. The protein localises to the cytoskeleton. It is found in the spindle. It catalyses the reaction [protein]-peptidylproline (omega=180) = [protein]-peptidylproline (omega=0). Its function is as follows. Involved as a ribosomal RNA processing factor in ribosome biogenesis. Binds to tightly bent AT-rich stretches of double-stranded DNA. This chain is Peptidyl-prolyl cis-trans isomerase NIMA-interacting 4 (Pin4), found in Mus musculus (Mouse).